Consider the following 399-residue polypeptide: Subtilisin-like protease 4 (399 aa).

The first 19 residues, 1-19, serve as a signal peptide directing secretion; it reads MVCLKTLSVFLAAFAAADA. The propeptide occupies 20-118; it reads RAVFKTQGHK…VEQDQVVRIS (99 aa). Residues 38-117 form the Inhibitor I9 domain; it reads YIVVMKDGVS…YVEQDQVVRI (80 aa). Asparagine 102 carries N-linked (GlcNAc...) asparagine glycosylation. In terms of domain architecture, Peptidase S8 spans 128–399; the sequence is SWGLGRVSHR…NRLLYNGSGQ (272 aa). Catalysis depends on charge relay system residues aspartate 160 and histidine 191. Asparagine 252 and asparagine 308 each carry an N-linked (GlcNAc...) asparagine glycan. Serine 346 serves as the catalytic Charge relay system. Asparagine 395 carries an N-linked (GlcNAc...) asparagine glycan.

Belongs to the peptidase S8 family.

Its subcellular location is the secreted. In terms of biological role, secreted subtilisin-like serine protease with keratinolytic activity that contributes to pathogenicity. The polypeptide is Subtilisin-like protease 4 (SUB4) (Trichophyton rubrum (Athlete's foot fungus)).